The following is a 457-amino-acid chain: Phosphomethylpyrimidine synthase (457 aa).

Residues asparagine 81, methionine 110, tyrosine 139, histidine 175, 195–197 (SRG), 236–239 (DALR), and glutamate 275 contribute to the substrate site. Zn(2+) is bound at residue histidine 279. Tyrosine 302 contacts substrate. Histidine 343 provides a ligand contact to Zn(2+). Positions 423, 426, and 431 each coordinate [4Fe-4S] cluster.

It belongs to the ThiC family. Requires [4Fe-4S] cluster as cofactor.

It carries out the reaction 5-amino-1-(5-phospho-beta-D-ribosyl)imidazole + S-adenosyl-L-methionine = 4-amino-2-methyl-5-(phosphooxymethyl)pyrimidine + CO + 5'-deoxyadenosine + formate + L-methionine + 3 H(+). Its pathway is cofactor biosynthesis; thiamine diphosphate biosynthesis. Its function is as follows. Catalyzes the synthesis of the hydroxymethylpyrimidine phosphate (HMP-P) moiety of thiamine from aminoimidazole ribotide (AIR) in a radical S-adenosyl-L-methionine (SAM)-dependent reaction. The chain is Phosphomethylpyrimidine synthase from Aquifex aeolicus (strain VF5).